The sequence spans 165 residues: Group 10 secretory phospholipase A2 (165 aa).

An N-terminal signal peptide occupies residues 1–31 (MGPLPVCLPIMLLLLLPSLLLLLLLPGPGSG). Positions 32 to 42 (EASRILRVHRR) are excised as a propeptide. 8 cysteine pairs are disulfide-bonded: Cys53–Cys111, Cys67–Cys157, Cys69–Cys85, Cys84–Cys139, Cys90–Cys164, Cys91–Cys132, Cys100–Cys125, and Cys118–Cys130. The Ca(2+) site is built by Phe68, Gly70, and Gly72. Residue His88 is part of the active site. Asp89 is a Ca(2+) binding site. Residue Asn113 is glycosylated (N-linked (GlcNAc...) asparagine). Asp133 is an active-site residue.

The protein belongs to the phospholipase A2 family. As to quaternary structure, interacts with PLA2R1; this interaction mediates PLA2G10 clearance and inactivation. It depends on Ca(2+) as a cofactor. As to expression, found in spleen, thymus, peripheral blood leukocytes, pancreas, lung, and colon. Expressed in neuronal fibers in dorsal root ganglia and in peripheral tissues including stomach, white adipose tissue and prostate (at protein level).

It localises to the secreted. It is found in the lysosome. The protein resides in the cytoplasmic vesicle. Its subcellular location is the secretory vesicle. The protein localises to the acrosome. The catalysed reaction is a 1,2-diacyl-sn-glycero-3-phosphocholine + H2O = a 1-acyl-sn-glycero-3-phosphocholine + a fatty acid + H(+). It catalyses the reaction 1-hexadecanoyl-2-(9Z-octadecenoyl)-sn-glycero-3-phosphocholine + H2O = 1-hexadecanoyl-sn-glycero-3-phosphocholine + (9Z)-octadecenoate + H(+). The enzyme catalyses 1-octadecanoyl-2-(5Z,8Z,11Z,14Z-eicosatetraenoyl)-sn-glycero-3-phosphocholine + H2O = 1-octadecanoyl-sn-glycero-3-phosphocholine + (5Z,8Z,11Z,14Z)-eicosatetraenoate + H(+). It carries out the reaction 1,2-dihexadecanoyl-sn-glycero-3-phosphocholine + H2O = 1-hexadecanoyl-sn-glycero-3-phosphocholine + hexadecanoate + H(+). The catalysed reaction is 1-hexadecanoyl-2-(9Z-octadecenoyl)-sn-glycero-3-phosphoglycerol + H2O = 1-hexadecanoyl-sn-glycero-3-phosphoglycerol + (9Z)-octadecenoate + H(+). It catalyses the reaction 1,2-dihexadecanoyl-sn-glycero-3-phospho-(1'-sn-glycerol) + H2O = 1-hexadecanoyl-sn-glycero-3-phospho-(1'-sn-glycerol) + hexadecanoate + H(+). The enzyme catalyses 1-hexadecanoyl-2-(9Z-octadecenoyl)-sn-glycero-3-phospho-L-serine + H2O = 1-hexadecanoyl-sn-glycero-3-phospho-L-serine + (9Z)-octadecenoate + H(+). It carries out the reaction 1-hexadecanoyl-2-(9Z,12Z-octadecadienoyl)-sn-glycero-3-phosphoethanolamine + H2O = 1-hexadecanoyl-sn-glycero-3-phosphoethanolamine + (9Z,12Z)-octadecadienoate + H(+). The catalysed reaction is 1-hexadecanoyl-2-(9Z-octadecenoyl)-sn-glycero-3-phosphate + H2O = 1-hexadecanoyl-sn-glycero-3-phosphate + (9Z)-octadecenoate + H(+). It catalyses the reaction 1-O-hexadecyl-2-acetyl-sn-glycero-3-phosphocholine + H2O = 1-O-hexadecyl-sn-glycero-3-phosphocholine + acetate + H(+). Inhibited by methyl indoxam. Secretory calcium-dependent phospholipase A2 that primarily targets extracellular phospholipids. Hydrolyzes the ester bond of the fatty acyl group attached at sn-2 position of phospholipids with preference for phosphatidylcholines and phosphatidylglycerols over phosphatidylethanolamines. Preferentially releases sn-2 omega-6 and omega-3 polyunsaturated fatty acyl (PUFA) chains over saturated fatty acyls. Contributes to phospholipid remodeling of very low-density lipoprotein (VLDL), low-density lipoprotein (LDL) and high-density lipoprotein (HDL) particles. Hydrolyzes LDL phospholipids releasing unsaturated fatty acids that regulate macrophage differentiation toward foam cells. Efficiently hydrolyzes and inactivates platelet activating factor (PAF), a potent lipid mediator present in oxidized LDL. May act in an autocrine and paracrine manner. Secreted by lung epithelium, targets membrane phospholipids of infiltrating eosinophils, releasing arachidonate and boosting eicosanoid and cysteinyl leukotriene synthesis involved in airway inflammatory response. Secreted by gut epithelium, hydrolyzes dietary and biliary phosphatidylcholines in the gastrointestinal lumen. Plays a stem cell regulator role in colon epithelium. Within intracellular compartment, mediates Paneth-like cell differentiation and its stem cell supporting functions by inhibiting the Wnt signaling pathway in intestinal stem cell (ISC). Secreted in the intestinal lumen upon inflammation, acts in an autocrine way and promotes prostaglandin E2 synthesis that stimulates Wnt signaling pathway in ISCs and tissue regeneration. May participate in hair follicle morphogenesis by regulating phosphatidylethanolamines metabolism at the outermost epithelial layer and facilitating melanin synthesis. By releasing lysophosphatidylcholines (LPCs) at sperm acrosome, controls sperm cell capacitation, acrosome reaction and overall fertility. May promote neurite outgrowth in neuron fibers involved in nociception. Contributes to lipid remodeling of cellular membranes and generation of lipid mediators involved in pathogen clearance. Cleaves sn-2 fatty acyl chains of phosphatidylglycerols and phosphatidylethanolamines, which are major components of membrane phospholipids in bacteria. Displays bactericidal activity against Gram-positive bacteria by directly hydrolyzing phospholipids of the bacterial membrane. In pulmonary epithelium, may contribute to host defense response against adenoviral infection. Prevents adenovirus entry into host cells by hydrolyzing host cell plasma membrane, releasing C16:0 LPCs that inhibit virus-mediated membrane fusion and viral infection. Likely prevents adenoviral entry into the endosomes of host cells. May play a role in maturation and activation of innate immune cells including macrophages, group 2 innate lymphoid cells and mast cells. The sequence is that of Group 10 secretory phospholipase A2 (PLA2G10) from Homo sapiens (Human).